The chain runs to 174 residues: Crossover junction endodeoxyribonuclease RuvC (174 aa).

Residues Asp-8, Glu-67, and Asp-139 contribute to the active site. Mg(2+) contacts are provided by Asp-8, Glu-67, and Asp-139.

Belongs to the RuvC family. Homodimer which binds Holliday junction (HJ) DNA. The HJ becomes 2-fold symmetrical on binding to RuvC with unstacked arms; it has a different conformation from HJ DNA in complex with RuvA. In the full resolvosome a probable DNA-RuvA(4)-RuvB(12)-RuvC(2) complex forms which resolves the HJ. Mg(2+) is required as a cofactor.

It localises to the cytoplasm. The catalysed reaction is Endonucleolytic cleavage at a junction such as a reciprocal single-stranded crossover between two homologous DNA duplexes (Holliday junction).. In terms of biological role, the RuvA-RuvB-RuvC complex processes Holliday junction (HJ) DNA during genetic recombination and DNA repair. Endonuclease that resolves HJ intermediates. Cleaves cruciform DNA by making single-stranded nicks across the HJ at symmetrical positions within the homologous arms, yielding a 5'-phosphate and a 3'-hydroxyl group; requires a central core of homology in the junction. The consensus cleavage sequence is 5'-(A/T)TT(C/G)-3'. Cleavage occurs on the 3'-side of the TT dinucleotide at the point of strand exchange. HJ branch migration catalyzed by RuvA-RuvB allows RuvC to scan DNA until it finds its consensus sequence, where it cleaves and resolves the cruciform DNA. In Pseudomonas putida (strain ATCC 47054 / DSM 6125 / CFBP 8728 / NCIMB 11950 / KT2440), this protein is Crossover junction endodeoxyribonuclease RuvC.